The sequence spans 575 residues: Chaperonin 60 subunit alpha 2, chloroplastic (575 aa).

Over residues 1–18 the composition is skewed to low complexity; it reads MFAVSPSSFSPTTISPRR. Residues 1-27 are disordered; the sequence is MFAVSPSSFSPTTISPRRSGQRNEPRK. A chloroplast-targeting transit peptide spans 1 to 32; that stretch reads MFAVSPSSFSPTTISPRRSGQRNEPRKFSVVR.

The protein belongs to the chaperonin (HSP60) family. Part of the Cpn60 complex composed of 7 alpha and 7 beta subunits.

It localises to the plastid. It is found in the chloroplast. Involved in protein assisted folding. The chain is Chaperonin 60 subunit alpha 2, chloroplastic (CPN60A2) from Arabidopsis thaliana (Mouse-ear cress).